Reading from the N-terminus, the 360-residue chain is MSYPEKFEGIAIQSHEDWKNPKKTKYDPKPFYDHDIDIKIEACGVCGSDIHCAAGHWGNMKMPLVVGHEIVGKVVKLGPKSNSGLKVGQRVGVGAQVFSCLECDRCKNDNEPYCTKFVTTYSQPYEDGYVSQGGYANYVRVHEHFVVPIPENIPSHLAAPLLCGGLTVYSPLVRNGCGPGKKVGIVGLGGIGSMGTLISKAMGAETYVISRSSRKREDAMKMGADHYIATLEEGDWGEKYFDTFDLIVVCASSLTDIDFNIMPKAMKVGGRIVSISIPEQHEMLSLKPYGLKAVSISYSALGSIKELNQLLKLVSEKDIKIWVETLPVGEAGVHEAFERMEKGDVRYRFTLVGYDKEFSD.

Position 46 (Cys46) interacts with Zn(2+). Gly47 and His51 together coordinate NADP(+). Zn(2+) is bound by residues His68, Cys100, Cys103, Cys106, and Cys114. Ser131 bears the Phosphoserine mark. A Zn(2+)-binding site is contributed by Cys163. 16 residues coordinate NADP(+): Leu188, Gly190, Ile191, Ser210, Arg211, Lys215, Cys250, Ser252, Thr255, Asp256, Ile275, Ile277, Tyr298, Ser299, Leu301, and Arg348. Phosphoserine is present on Ser359.

Belongs to the zinc-containing alcohol dehydrogenase family. In terms of assembly, homodimer. Zn(2+) serves as cofactor.

The protein localises to the cytoplasm. The protein resides in the nucleus. The catalysed reaction is a primary alcohol + NADP(+) = an aldehyde + NADPH + H(+). It catalyses the reaction (E)-cinnamyl alcohol + NADP(+) = (E)-cinnamaldehyde + NADPH + H(+). It carries out the reaction hexan-1-ol + NADP(+) = hexanal + NADPH + H(+). The enzyme catalyses 3-methylbutanol + NADP(+) = 3-methylbutanal + NADPH + H(+). The catalysed reaction is S-nitroso-CoA + NADPH + H(+) = sulfinamide-CoA + NADP(+). In terms of biological role, NADP-dependent, medium-chain alcohol dehydrogenase with a broad substrate specificity. Aldehydes exhibited 50-12000 times higher catalytic efficiency than the corresponding alcohols, therefore the major function of the enzyme is as an aldehyde reductase. The enzyme is active towards aromatic and aliphatic (linear and branched-chain) aldehydes. The enzyme is very active towards aromatic aldehydes, such as cinnamaldehyde, benzaldehyde and substituted benzaldehydes, such as veratraldehyde and panisaldehyde. It exhibits low activity towards substituted cinnamaldehydes, such as coniferaldehyde and sinapaldehyde. The enzyme has no activity with ketones, such as acetone or cyclohexanone. For the reverse reaction, linear and branched-chain primary alcohols are substrates, whereas very low activity is found with secondary alcohols, such as butan-2-ol. The enzyme may be physiologically involved in several steps of the lignin degradation pathway, initiated by other microorganisms, in the synthesis of fusel alcohols, products derived from the aminoacidic metabolism, and in the homeostasis of NADP(H). Has the ability to reduce 5-hydroxymethyl furfural (HMF), a furan derivative which is formed during the hydrolysis of lignocellulosic materials, to 5-hydroxymethylfurfuryl alcohol, thereby alleviating the inhibition of the fermentation of lignocellulose hydrolysates by HMF during fuel ethanol production. Also acts as an inhibitor of protein S-nitrosylation by mediating degradation of S-nitroso-coenzyme A (S-nitroso-CoA), a cofactor required to S-nitrosylate proteins. This chain is NADP-dependent alcohol dehydrogenase 6, found in Saccharomyces cerevisiae (strain ATCC 204508 / S288c) (Baker's yeast).